The chain runs to 525 residues: Ribonuclease Y (525 aa).

A helical membrane pass occupies residues isoleucine 3 to phenylalanine 23. A KH domain is found at alanine 215–isoleucine 300. An HD domain is found at leucine 341–serine 433.

This sequence belongs to the RNase Y family.

It localises to the cell membrane. Functionally, endoribonuclease that initiates mRNA decay. This is Ribonuclease Y from Chlorobium phaeobacteroides (strain DSM 266 / SMG 266 / 2430).